Reading from the N-terminus, the 65-residue chain is uncharacterized protein (65 aa).

A run of 2 helical transmembrane segments spans residues 12-31 and 41-63; these read IVKW…LIVV and LVAR…AIIV.

The protein localises to the cell membrane. This is an uncharacterized protein from Halalkalibacterium halodurans (strain ATCC BAA-125 / DSM 18197 / FERM 7344 / JCM 9153 / C-125) (Bacillus halodurans).